Consider the following 209-residue polypeptide: MEYATMSSSNSTHNFQRKIALIGARNVGKTTLTVRFVESRFVESYYPTIENEFTRIIPYKSHDCTLEILDTAGQDEVSLLNIKSLTGVRGIILCYSIINRASFDLIPILWDKLVDQLGKDNLPVILVGTKADLGRSTKGVKRCVTKAEGEKLASTIGSQDKRNQAAFIECSAELDYNVEETFMLLLKQMERVEGTLGLDAENNNKCSIM.

Residue M1 is modified to N-acetylmethionine. Positions 28, 29, 30, 31, 42, 45, 48, 132, and 172 each coordinate GTP. T30 contributes to the Mg(2+) binding site. The short motif at 45-53 is the Effector region element; it reads YYPTIENEF. Residue T48 coordinates Mg(2+). At C206 the chain carries Cysteine methyl ester. Residue C206 is the site of S-farnesyl cysteine attachment. Residues 207–209 constitute a propeptide, removed in mature form; that stretch reads SIM.

Belongs to the small GTPase superfamily. Rheb family. In terms of assembly, interacts with BTN2.

It is found in the cell membrane. The enzyme catalyses GTP + H2O = GDP + phosphate + H(+). Functionally, binds GTP and exhibits intrinsic GTPase activity. Involved in the regulation of arginine and lysine uptake. Acts through the CAN1 permease. The polypeptide is GTP-binding protein RHB1 (RHB1) (Saccharomyces cerevisiae (strain ATCC 204508 / S288c) (Baker's yeast)).